Reading from the N-terminus, the 214-residue chain is Thymidylate kinase (214 aa).

10–17 (GGEGAGKS) contacts ATP.

The protein belongs to the thymidylate kinase family.

The catalysed reaction is dTMP + ATP = dTDP + ADP. Its function is as follows. Phosphorylation of dTMP to form dTDP in both de novo and salvage pathways of dTTP synthesis. This Brucella suis (strain ATCC 23445 / NCTC 10510) protein is Thymidylate kinase.